We begin with the raw amino-acid sequence, 339 residues long: 1-aminocyclopropane-1-carboxylate deaminase (339 aa).

K52 carries the post-translational modification N6-(pyridoxal phosphate)lysine. The Nucleophile role is filled by S79.

This sequence belongs to the ACC deaminase/D-cysteine desulfhydrase family. In terms of assembly, homotrimer. Pyridoxal 5'-phosphate is required as a cofactor.

The catalysed reaction is 1-aminocyclopropane-1-carboxylate + H2O = 2-oxobutanoate + NH4(+). Catalyzes a cyclopropane ring-opening reaction, the irreversible conversion of 1-aminocyclopropane-1-carboxylate (ACC) to ammonia and alpha-ketobutyrate. Allows growth on ACC as a nitrogen source. The polypeptide is 1-aminocyclopropane-1-carboxylate deaminase (Rhizobium leguminosarum bv. viciae).